Reading from the N-terminus, the 146-residue chain is Ribonuclease H (146 aa).

One can recognise an RNase H type-1 domain in the interval 1 to 143 (MQKKVTIYTD…CDYLATQAIK (143 aa)). Mg(2+) is bound by residues aspartate 10, glutamate 48, aspartate 70, and aspartate 135.

This sequence belongs to the RNase H family. In terms of assembly, monomer. Requires Mg(2+) as cofactor.

The protein localises to the cytoplasm. The enzyme catalyses Endonucleolytic cleavage to 5'-phosphomonoester.. Endonuclease that specifically degrades the RNA of RNA-DNA hybrids. The chain is Ribonuclease H from Chlorobium phaeobacteroides (strain BS1).